A 382-amino-acid chain; its full sequence is Mannitol-1-phosphate 5-dehydrogenase (382 aa).

3–14 is a binding site for NAD(+); it reads ALHFGAGNIGRG. Lysine 269 bears the N6-acetyllysine mark.

It belongs to the mannitol dehydrogenase family.

The catalysed reaction is D-mannitol 1-phosphate + NAD(+) = beta-D-fructose 6-phosphate + NADH + H(+). In Escherichia coli O45:K1 (strain S88 / ExPEC), this protein is Mannitol-1-phosphate 5-dehydrogenase.